We begin with the raw amino-acid sequence, 1382 residues long: Hepatocyte growth factor receptor (1382 aa).

An N-terminal signal peptide occupies residues 1 to 24 (MKSPAVLAPGILVFLFTFVQKSDG). Over 25 to 933 (ECKEALVKSR…VIVQPDQNFT (909 aa)) the chain is Extracellular. The Sema domain maps to 27–516 (KEALVKSRMN…TGKKITKIPL (490 aa)). N-linked (GlcNAc...) asparagine glycosylation is present at asparagine 45. Intrachain disulfides connect cysteine 95-cysteine 101, cysteine 98-cysteine 160, cysteine 133-cysteine 141, and cysteine 173-cysteine 176. Residue asparagine 106 is glycosylated (N-linked (GlcNAc...) asparagine). Residue asparagine 149 is glycosylated (N-linked (GlcNAc...) asparagine). N-linked (GlcNAc...) asparagine glycans are attached at residues asparagine 203 and asparagine 359. 2 disulfide bridges follow: cysteine 299/cysteine 364 and cysteine 386/cysteine 398. Residues asparagine 400 and asparagine 406 are each glycosylated (N-linked (GlcNAc...) asparagine). 4 disulfides stabilise this stretch: cysteine 521–cysteine 539, cysteine 527–cysteine 562, cysteine 530–cysteine 546, and cysteine 542–cysteine 552. 3 IPT/TIG domains span residues 564-656 (PAIY…FSYV), 658-740 (PIIT…FIYR), and 743-837 (PIVY…LIYV). The O-linked (Man) threonine glycan is linked to threonine 583. Asparagine 608 and asparagine 636 each carry an N-linked (GlcNAc...) asparagine glycan. O-linked (Man) threonine glycosylation is found at threonine 677 and threonine 762. 3 N-linked (GlcNAc...) asparagine glycosylation sites follow: asparagine 786, asparagine 880, and asparagine 931. The chain crosses the membrane as a helical span at residues 934–956 (GLIVGVVSISIILLLLLGLFLWL). Residues 957–1382 (KKRKQIKDLG…QDNVNGEGDT (426 aa)) are Cytoplasmic-facing. At serine 967 the chain carries Phosphoserine. Phosphothreonine is present on threonine 978. Serine 991, serine 998, and serine 1001 each carry phosphoserine. Position 1004 is a phosphotyrosine (tyrosine 1004). Residues 1079–1346 (VHFNEVIGRG…RISAIFSTFI (268 aa)) enclose the Protein kinase domain. Residues 1085 to 1093 (IGRGHFGCV) and lysine 1111 contribute to the ATP site. The active-site Proton acceptor is the aspartate 1205. The tract at residues 1213–1382 (LDEKFTVKVA…QDNVNGEGDT (170 aa)) is interaction with RANBP9. Residue tyrosine 1231 is modified to Phosphotyrosine. Tyrosine 1235 and tyrosine 1236 each carry phosphotyrosine; by autocatalysis. Threonine 1290 carries the phosphothreonine modification. The interaction with MUC20 stretch occupies residues 1321-1360 (WHPKAELRPSFSELVSRISAIFSTFIGEHYVHVNATYVNV). 2 positions are modified to phosphotyrosine; by autocatalysis: tyrosine 1350 and tyrosine 1357. Phosphotyrosine is present on tyrosine 1366.

Belongs to the protein kinase superfamily. Tyr protein kinase family. In terms of assembly, heterodimer made of an alpha chain (50 kDa) and a beta chain (145 kDa) which are disulfide linked. Binds PLXNB1. Interacts when phosphorylated with downstream effectors including STAT3, PIK3R1, SRC, PCLG1, GRB2 and GAB1. Interacts with SPSB1, SPSB2 and SPSB4. Interacts with INPP5D/SHIP1. When phosphorylated at Tyr-1357, interacts with INPPL1/SHIP2. Interacts with RANBP9 and RANBP10, as well as SPSB1, SPSB2, SPSB3 and SPSB4. SPSB1 binding occurs in the presence and in the absence of HGF, however HGF treatment has a positive effect on this interaction. Interacts with MUC20; prevents interaction with GRB2 and suppresses hepatocyte growth factor-induced cell proliferation. Interacts with GRB10. Interacts with PTPN1 and PTPN2. Interacts with HSP90AA1 and HSP90AB1; the interaction suppresses MET kinase activity. Interacts with tensin TNS3. Interacts (when phosphorylated) with tensin TNS4 (via SH2 domain); the interaction increases MET protein stability by inhibiting MET endocytosis and subsequent lysosomal degradation. Post-translationally, autophosphorylated in response to ligand binding on Tyr-1235 and Tyr-1236 in the kinase domain leading to further phosphorylation of Tyr-1350 and Tyr-1357 in the C-terminal multifunctional docking site. Dephosphorylated by PTPRJ at Tyr-1350 and Tyr-1366. Dephosphorylated by PTPN1 and PTPN2. In terms of processing, ubiquitinated. Ubiquitination by CBL regulates the receptor stability and activity through proteasomal degradation. O-mannosylation of IPT/TIG domains by TMEM260 is required for protein maturation. O-mannosylated residues are composed of single mannose glycans that are not elongated or modified.

It localises to the membrane. The catalysed reaction is L-tyrosyl-[protein] + ATP = O-phospho-L-tyrosyl-[protein] + ADP + H(+). Its activity is regulated as follows. In its inactive state, the C-terminal tail interacts with the catalytic domain and inhibits the kinase activity. Upon ligand binding, the C-terminal tail is displaced and becomes phosphorylated, thus increasing the kinase activity. In terms of biological role, receptor tyrosine kinase that transduces signals from the extracellular matrix into the cytoplasm by binding to hepatocyte growth factor/HGF ligand. Regulates many physiological processes including proliferation, scattering, morphogenesis and survival. Ligand binding at the cell surface induces autophosphorylation of MET on its intracellular domain that provides docking sites for downstream signaling molecules. Following activation by ligand, interacts with the PI3-kinase subunit PIK3R1, PLCG1, SRC, GRB2, STAT3 or the adapter GAB1. Recruitment of these downstream effectors by MET leads to the activation of several signaling cascades including the RAS-ERK, PI3 kinase-AKT, or PLCgamma-PKC. The RAS-ERK activation is associated with the morphogenetic effects while PI3K/AKT coordinates prosurvival effects. During embryonic development, MET signaling plays a role in gastrulation, development and migration of muscles and neuronal precursors, angiogenesis and kidney formation. In adults, participates in wound healing as well as organ regeneration and tissue remodeling. Also promotes differentiation and proliferation of hematopoietic cells. This Muntiacus muntjak (Barking deer) protein is Hepatocyte growth factor receptor (MET).